We begin with the raw amino-acid sequence, 957 residues long: ADAMTS-like protein 2 (957 aa).

The N-terminal stretch at 1-29 (MDGRRQHPHWAWSLLAVAVVAGGAAPTEA) is a signal peptide. A TSP type-1 1 domain is found at 47-106 (AYWWGEWTKWTACSRSCGGGVTSQERHCLQQRRKSVPGTGNRTCVGTSKRYQLCRVQECP). 3 cysteine pairs are disulfide-bonded: Cys59–Cys100, Cys63–Cys105, and Cys74–Cys90. Residues Asn87, Asn374, Asn435, Asn482, Asn518, Asn530, Asn539, and Asn550 are each glycosylated (N-linked (GlcNAc...) asparagine). A compositionally biased stretch (polar residues) spans 532–544 (SSEAPFPNTSASP). Residues 532 to 568 (SSEAPFPNTSASPPNLAGNRTHKARTRPKARKQGVSP) are disordered. Basic residues predominate over residues 551–563 (RTHKARTRPKARK). 6 TSP type-1 domains span residues 570–624 (DMYR…EFCA), 628–692 (CQPR…PACG), 694–742 (QWEM…TGPP), 743–801 (CDRQ…KNCP), 803–857 (HWLA…TCFE), and 859–914 (PCFK…QPCP). Residue Asn737 is glycosylated (N-linked (GlcNAc...) asparagine). The N-linked (GlcNAc...) asparagine glycan is linked to Asn813. The region spanning 918–956 (PDDSCQDQPGTNCALAIKVNLCGHWYYSKACCRSCRPPH) is the PLAC domain.

Interacts with LTBP1. In terms of processing, glycosylated. Can be O-fucosylated by POFUT2 on a serine or a threonine residue found within the consensus sequence C1-X(2)-(S/T)-C2-G of the TSP type-1 repeat domains where C1 and C2 are the first and second cysteine residue of the repeat, respectively. Fucosylated repeats can then be further glycosylated by the addition of a beta-1,3-glucose residue by the glucosyltransferase, B3GALTL. Fucosylation mediates the efficient secretion of ADAMTS family members. Can also be C-glycosylated with one or two mannose molecules on tryptophan residues within the consensus sequence W-X-X-W of the TPRs, and N-glycosylated. These other glycosylations can also facilitate secretion.

It is found in the secreted. This chain is ADAMTS-like protein 2 (Adamtsl2), found in Mus musculus (Mouse).